Consider the following 329-residue polypeptide: NADH-quinone oxidoreductase subunit H 1 (329 aa).

8 helical membrane passes run 12 to 32 (LAKIALIFFVVLTLAAYLVFA), 78 to 98 (WLFYLAPAMAAIPAILTFAVI), 120 to 140 (VGLLFFLALSSIAVYGVALGG), 159 to 179 (LISYELSMGLSLVPTVMLAGS), 191 to 211 (GIWFIVYQPLAFVIFLISIAA), 242 to 262 (LFFVGEYINIIVLGGLATTFF), 270 to 290 (WLPPFVWFSAKTLAFAFFFIW), and 308 to 328 (WKVLTPLALVNILVTGWILML).

Belongs to the complex I subunit 1 family. In terms of assembly, NDH-1 is composed of 14 different subunits. Subunits NuoA, H, J, K, L, M, N constitute the membrane sector of the complex.

The protein resides in the cell inner membrane. It catalyses the reaction a quinone + NADH + 5 H(+)(in) = a quinol + NAD(+) + 4 H(+)(out). Functionally, NDH-1 shuttles electrons from NADH, via FMN and iron-sulfur (Fe-S) centers, to quinones in the respiratory chain. The immediate electron acceptor for the enzyme in this species is believed to be ubiquinone. Couples the redox reaction to proton translocation (for every two electrons transferred, four hydrogen ions are translocated across the cytoplasmic membrane), and thus conserves the redox energy in a proton gradient. This subunit may bind ubiquinone. This Geobacter metallireducens (strain ATCC 53774 / DSM 7210 / GS-15) protein is NADH-quinone oxidoreductase subunit H 1.